The primary structure comprises 294 residues: F-box protein SKIP3 (294 aa).

Residues 21–67 (SSTLDSLPEGCISNIISFTSPEDACVAAAVSKIFESAVKSDIVWEKF) enclose the F-box domain.

As to quaternary structure, part of a SCF (SKP1-cullin-F-box) protein ligase complex. Interacts with SKP1A/ASK1.

The protein operates within protein modification; protein ubiquitination. In Arabidopsis thaliana (Mouse-ear cress), this protein is F-box protein SKIP3 (SKIP3).